The primary structure comprises 64 residues: ICEBs1 excisionase (64 aa).

In terms of biological role, required for the excision of the integrative and conjugative element ICEBs1. Excision of ICEBs1 requires two sites, attL and attR, at the left and right ends of the integrated ICEBs1. The polypeptide is ICEBs1 excisionase (xis) (Bacillus subtilis (strain 168)).